Consider the following 224-residue polypeptide: UPF0758 protein AHA_0160 (224 aa).

In terms of domain architecture, MPN spans 102–224 (PLTSPQLTRD…TVSFAERGWL (123 aa)). The Zn(2+) site is built by histidine 173, histidine 175, and aspartate 186. The short motif at 173–186 (HNHPSGVAEPSRAD) is the JAMM motif element.

It belongs to the UPF0758 family.

This is UPF0758 protein AHA_0160 from Aeromonas hydrophila subsp. hydrophila (strain ATCC 7966 / DSM 30187 / BCRC 13018 / CCUG 14551 / JCM 1027 / KCTC 2358 / NCIMB 9240 / NCTC 8049).